The chain runs to 406 residues: Sorting nexin-6 (406 aa).

M1 carries the post-translational modification N-acetylmethionine. An N-acetylmethionine; in Sorting nexin-6, N-terminally processed modification is found at M2. Positions 2–179 (MEGLDDGPDF…NQDLSVRGKN (178 aa)) are interaction with PIM1. Residues 26–173 (LQSDAALQVD…HVFLEYNQDL (148 aa)) enclose the PX domain. Residues 41–47 (SERDKVK), 100–106 (FDASREK), and 114–117 (EGSM) each bind a 1,2-diacyl-sn-glycero-3-phospho-(1D-myo-inositol-4,5-bisphosphate). S116 and S194 each carry phosphoserine. Residues 182 to 199 (EKLEDFFKNMVKSADGVI) are membrane-binding amphipathic helix. The 204-residue stretch at 203 to 406 (VKDVDDFFEH…NCLAVLNGDT (204 aa)) folds into the BAR domain.

Belongs to the sorting nexin family. As to quaternary structure, forms heterodimers with BAR domain-containing sorting nexins SNX1 and SNX2. The heterodimers are proposed to self-assemble into helical arrays on the membrane to stabilize and expand local membrane curvature underlying endosomal tubule formation. Thought to be a component of the originally described retromer complex (also called SNX-BAR retromer) which is a pentamer containing the heterotrimeric retromer cargo-selective complex (CSC), also described as vacuolar protein sorting subcomplex (VPS), and a heterodimeric membrane-deforming subcomplex formed between SNX1 or SNX2 and SNX5 or SNX6 (also called SNX-BAR subcomplex); the respective CSC and SNX-BAR subcomplexes associate with low affinity. Interacts with SNX1, SNX2, VPS26A, VPS29, VPS35, CDKN1B, TGFB receptors, BACE1, BRMS1, PIP5K1C isoform 3. Interacts with DCTN1; the association with DCTN1 is involved in movement of retromer-c ontaining vesicles toward the TGN. Interacts with CDKN1B and GIT1. Interacts with PIM1; translocating SNX6 to the nucleus. In vitro phosphorylated by PIM1; not affecting PIM1-dependent nuclear translocation.

Its subcellular location is the early endosome. The protein resides in the early endosome membrane. It localises to the cytoplasmic vesicle. The protein localises to the cytoplasm. It is found in the nucleus. Functionally, involved in several stages of intracellular trafficking. Interacts with membranes phosphatidylinositol 3,4-bisphosphate and/or phosphatidylinositol 4,5-bisphosphate. Acts in part as component of the retromer membrane-deforming SNX-BAR subcomplex. The SNX-BAR retromer mediates retrograde transport of cargo proteins from endosomes to the trans-Golgi network (TGN) and is involved in endosome-to-plasma membrane transport for cargo protein recycling. The SNX-BAR subcomplex functions to deform the donor membrane into a tubular profile called endosome-to-TGN transport carrier (ETC). Does not have in vitro vesicle-to-membrane remodeling activity. Involved in retrograde endosome-to-TGN transport of lysosomal enzyme receptor IGF2R. May function as link between transport vesicles and dynactin. Negatively regulates retrograde transport of BACE1 from the cell surface to the trans-Golgi network. Involved in E-cadherin sorting and degradation; inhibits PIP5K1C isoform 3-mediated E-cadherin degradation. In association with GIT1 involved in EGFR degradation. Promotes lysosomal degradation of CDKN1B. May contribute to transcription regulation. The sequence is that of Sorting nexin-6 (SNX6) from Homo sapiens (Human).